Here is a 231-residue protein sequence, read N- to C-terminus: Large ribosomal subunit protein uL1 (231 aa).

The protein belongs to the universal ribosomal protein uL1 family. Part of the 50S ribosomal subunit.

In terms of biological role, binds directly to 23S rRNA. The L1 stalk is quite mobile in the ribosome, and is involved in E site tRNA release. Functionally, protein L1 is also a translational repressor protein, it controls the translation of the L11 operon by binding to its mRNA. This is Large ribosomal subunit protein uL1 from Cellvibrio japonicus (strain Ueda107) (Pseudomonas fluorescens subsp. cellulosa).